A 49-amino-acid polypeptide reads, in one-letter code: Peridinin-chlorophyll a-binding protein (49 aa).

In terms of assembly, monomer. Post-translationally, binds 12 peridinin and 2 chlorophyll a molecules per monomer.

The protein localises to the plastid. It localises to the chloroplast. Its function is as follows. Water-soluble antenna for capture of solar energy in the blue-green range. Peridinin is an asymmetric carotenoid. This chain is Peridinin-chlorophyll a-binding protein, found in Alexandrium cohorticula (Dinoflagellate).